We begin with the raw amino-acid sequence, 334 residues long: Anthranilate phosphoribosyltransferase (334 aa).

Residues Gly-79, 82–83 (GD), Ser-87, 89–92 (NIST), 107–115 (KHGNRSISS), and Ser-119 contribute to the 5-phospho-alpha-D-ribose 1-diphosphate site. Residue Gly-79 coordinates anthranilate. Ser-91 contributes to the Mg(2+) binding site. Asn-110 contacts anthranilate. Arg-165 serves as a coordination point for anthranilate. Positions 224 and 225 each coordinate Mg(2+).

The protein belongs to the anthranilate phosphoribosyltransferase family. As to quaternary structure, homodimer. Mg(2+) serves as cofactor.

It catalyses the reaction N-(5-phospho-beta-D-ribosyl)anthranilate + diphosphate = 5-phospho-alpha-D-ribose 1-diphosphate + anthranilate. The protein operates within amino-acid biosynthesis; L-tryptophan biosynthesis; L-tryptophan from chorismate: step 2/5. Its function is as follows. Catalyzes the transfer of the phosphoribosyl group of 5-phosphorylribose-1-pyrophosphate (PRPP) to anthranilate to yield N-(5'-phosphoribosyl)-anthranilate (PRA). This Streptococcus pneumoniae (strain ATCC 700669 / Spain 23F-1) protein is Anthranilate phosphoribosyltransferase.